Here is a 140-residue protein sequence, read N- to C-terminus: Seminal plasma protein A3 (140 aa).

An N-terminal signal peptide occupies residues 1-25 (MALRLGLFLIWAGVSMFLQLDPVNG). Fibronectin type-II domains are found at residues 49 to 93 (TKDN…YCTK) and 94 to 140 (NDYA…WKYC). Disulfide bonds link Cys-54-Cys-78, Cys-68-Cys-91, Cys-99-Cys-125, and Cys-113-Cys-140.

This sequence belongs to the seminal plasma protein family.

The protein localises to the secreted. Functionally, the BSP-A proteins from seminal plasma exhibit both simulatory and inhibitory actions on the release of pituitary gonadotropins. The exact function of these proteins is not known. The sequence is that of Seminal plasma protein A3 from Bos taurus (Bovine).